The chain runs to 742 residues: Clamp-binding protein CrfC (742 aa).

The interval 41 to 45 (QLALP) is clamp-binding consensus. The 337-residue stretch at 66 to 402 (SRLEMVLAIV…LWEDSLFAQP (337 aa)) folds into the Dynamin-type G domain. The tract at residues 76 to 83 (GTMKAGKS) is G1 motif. The tract at residues 102-104 (MTA) is G2 motif. The G3 motif stretch occupies residues 236–239 (DTPG). The interval 297–300 (NKFD) is G4 motif. The tract at residues 331–334 (FPVS) is G5 motif. A coiled-coil region spans residues 440 to 472 (RAHGLNVACEQLRQNIHQVEESLQLLQLNQAQV).

This sequence belongs to the TRAFAC class dynamin-like GTPase superfamily. Dynamin/Fzo/YdjA family. Forms homooligomers. Binds to the beta sliding clamp processivity factor (DnaN) in the presence and absence of DNA, may bind to the clamp itself as homodimers or trimers. Homooligomers may be able to bind more than 1 clamp complex.

The protein resides in the cytoplasm. Its function is as follows. Important for the colocalization of sister nascent DNA strands after replication fork passage during DNA replication, and for positioning and subsequent partitioning of sister chromosomes. Does not have GTPase activity on its own. In Escherichia coli, this protein is Clamp-binding protein CrfC (crfC).